Consider the following 232-residue polypeptide: Phosphatidylserine decarboxylase proenzyme (232 aa).

Residue Ser-190 is the Schiff-base intermediate with substrate; via pyruvic acid of the active site. Ser-190 is subject to Pyruvic acid (Ser); by autocatalysis.

The protein belongs to the phosphatidylserine decarboxylase family. PSD-A subfamily. As to quaternary structure, heterodimer of a large membrane-associated beta subunit and a small pyruvoyl-containing alpha subunit. The cofactor is pyruvate. In terms of processing, is synthesized initially as an inactive proenzyme. Formation of the active enzyme involves a self-maturation process in which the active site pyruvoyl group is generated from an internal serine residue via an autocatalytic post-translational modification. Two non-identical subunits are generated from the proenzyme in this reaction, and the pyruvate is formed at the N-terminus of the alpha chain, which is derived from the carboxyl end of the proenzyme. The post-translation cleavage follows an unusual pathway, termed non-hydrolytic serinolysis, in which the side chain hydroxyl group of the serine supplies its oxygen atom to form the C-terminus of the beta chain, while the remainder of the serine residue undergoes an oxidative deamination to produce ammonia and the pyruvoyl prosthetic group on the alpha chain.

It is found in the cell membrane. It catalyses the reaction a 1,2-diacyl-sn-glycero-3-phospho-L-serine + H(+) = a 1,2-diacyl-sn-glycero-3-phosphoethanolamine + CO2. Its pathway is phospholipid metabolism; phosphatidylethanolamine biosynthesis; phosphatidylethanolamine from CDP-diacylglycerol: step 2/2. Its function is as follows. Catalyzes the formation of phosphatidylethanolamine (PtdEtn) from phosphatidylserine (PtdSer). The polypeptide is Phosphatidylserine decarboxylase proenzyme (Rhodopseudomonas palustris (strain ATCC BAA-98 / CGA009)).